The chain runs to 157 residues: Probable calcium-binding protein CML23 (157 aa).

EF-hand domains lie at 11–46 (GSME…LSPN), 47–82 (ASQE…SDQS), 86–121 (SAIR…LGEK), and 122–157 (CSIQ…NGSA). The Ca(2+) site is built by D24, N26, D28, K30, E35, D60, D62, N64, E71, D99, D101, N103, R105, E110, D135, D137, D139, C141, and E146.

Potential calcium sensor. In Arabidopsis thaliana (Mouse-ear cress), this protein is Probable calcium-binding protein CML23 (CML23).